Reading from the N-terminus, the 355-residue chain is S-adenosylmethionine:tRNA ribosyltransferase-isomerase (355 aa).

Belongs to the QueA family. In terms of assembly, monomer.

The protein localises to the cytoplasm. It catalyses the reaction 7-aminomethyl-7-carbaguanosine(34) in tRNA + S-adenosyl-L-methionine = epoxyqueuosine(34) in tRNA + adenine + L-methionine + 2 H(+). It participates in tRNA modification; tRNA-queuosine biosynthesis. Its function is as follows. Transfers and isomerizes the ribose moiety from AdoMet to the 7-aminomethyl group of 7-deazaguanine (preQ1-tRNA) to give epoxyqueuosine (oQ-tRNA). The protein is S-adenosylmethionine:tRNA ribosyltransferase-isomerase of Burkholderia ambifaria (strain MC40-6).